The sequence spans 721 residues: WD repeat and coiled-coil-containing protein (721 aa).

M1 is subject to N-acetylmethionine. WD repeat units lie at residues 55-98 (GQFE…MESS) and 154-194 (NTQG…LHRC). S299, S468, S501, and S523 each carry phosphoserine. Residues 520 to 537 (QPASLPRHSSTPDHTSTL) are compositionally biased toward polar residues. The disordered stretch occupies residues 520–553 (QPASLPRHSSTPDHTSTLEPPRLPQRKNLQSEKE). Position 530 is a phosphothreonine (T530). An interaction with HCK region spans residues 539–545 (PPRLPQR). Residues 556–584 (QLSKEVEILSRNLVEMQRCLSELTNRLHN) adopt a coiled-coil conformation. A phosphoserine mark is found at S686 and S690.

Oligomer. Interacts with HCK (via SH3 domain). Phosphorylated on Tyr when associated with HCK.

The chain is WD repeat and coiled-coil-containing protein from Homo sapiens (Human).